Reading from the N-terminus, the 268-residue chain is Protein limb expression 1 homolog (268 aa).

Belongs to the LIX1 family. As to quaternary structure, interacts with ft (via intracellular domain) and ds (via intracellular domain).

Its subcellular location is the apical cell membrane. The protein resides in the cytoplasm. Its function is as follows. Component of the Fat (ft) signaling pathway that functions in normal development of various organs such as the wing and leg. In developing imaginal disks, involved in regulating both the protein levels and apical localization of ft and ds. Involved in establishing planar cell polarity (PCP) along the anterior-posterior axis of the wing (the early Fz signaling event), probably by acting upstream of ds and ft to regulate Fz activity. The polypeptide is Protein limb expression 1 homolog (Drosophila melanogaster (Fruit fly)).